The chain runs to 118 residues: Large ribosomal subunit protein uL18 (118 aa).

This sequence belongs to the universal ribosomal protein uL18 family. In terms of assembly, part of the 50S ribosomal subunit; part of the 5S rRNA/L5/L18/L25 subcomplex. Contacts the 5S and 23S rRNAs.

Functionally, this is one of the proteins that bind and probably mediate the attachment of the 5S RNA into the large ribosomal subunit, where it forms part of the central protuberance. The chain is Large ribosomal subunit protein uL18 from Rickettsia akari (strain Hartford).